The following is a 344-amino-acid chain: Sulfate/thiosulfate import ATP-binding protein CysA (344 aa).

One can recognise an ABC transporter domain in the interval 3–237 (IEVRNLVKKF…PATAFVHGFI (235 aa)). An ATP-binding site is contributed by 35–42 (GPSGSGKT).

The protein belongs to the ABC transporter superfamily. Sulfate/tungstate importer (TC 3.A.1.6) family. The complex is composed of two ATP-binding proteins (CysA), two transmembrane proteins (CysT and CysW) and a solute-binding protein (CysP).

It is found in the cell inner membrane. It carries out the reaction sulfate(out) + ATP + H2O = sulfate(in) + ADP + phosphate + H(+). It catalyses the reaction thiosulfate(out) + ATP + H2O = thiosulfate(in) + ADP + phosphate + H(+). Part of the ABC transporter complex CysAWTP involved in sulfate/thiosulfate import. Responsible for energy coupling to the transport system. The protein is Sulfate/thiosulfate import ATP-binding protein CysA of Bradyrhizobium diazoefficiens (strain JCM 10833 / BCRC 13528 / IAM 13628 / NBRC 14792 / USDA 110).